We begin with the raw amino-acid sequence, 112 residues long: Putative iron-sulfur cluster insertion protein ErpA (112 aa).

Iron-sulfur cluster is bound by residues Cys-40, Cys-104, and Cys-106.

This sequence belongs to the HesB/IscA family. Homodimer. It depends on iron-sulfur cluster as a cofactor.

In terms of biological role, required for insertion of 4Fe-4S clusters. This is Putative iron-sulfur cluster insertion protein ErpA from Neisseria gonorrhoeae (strain ATCC 700825 / FA 1090).